The primary structure comprises 290 residues: Outer dense fiber protein 4 (290 aa).

S28 carries the phosphoserine modification. The next 4 helical transmembrane spans lie at 44–64, 132–152, 164–184, and 201–221; these read AQVV…LMVF, ISFI…HLPY, LIGI…LLLF, and IGWS…CGIL. The tract at residues 262-290 is disordered; it reads ADILDPTQDDQKPLSSDNIALPPNPDTTD.

The protein localises to the membrane. Its function is as follows. Component of the outer dense fibers (ODF) of spermatozoa which could be involved in sperm tail structure, sperm movement and general organization of cellular cytoskeleton. This is Outer dense fiber protein 4 (Odf4) from Rattus norvegicus (Rat).